The chain runs to 157 residues: Transcriptional repressor NrdR (157 aa).

The segment at 3–34 is a zinc-finger region; it reads CPFCGHMESQVKDSRPSEDGAAIRRRRLCPEC. Residues 49-139 enclose the ATP-cone domain; the sequence is LTIVKRSGRR…VYRDFRETSD (91 aa).

This sequence belongs to the NrdR family. Requires Zn(2+) as cofactor.

In terms of biological role, negatively regulates transcription of bacterial ribonucleotide reductase nrd genes and operons by binding to NrdR-boxes. The chain is Transcriptional repressor NrdR from Caulobacter sp. (strain K31).